The primary structure comprises 181 residues: Thioredoxin-like protein CITRX1, chloroplastic (181 aa).

Residues 1–20 form a disordered region; sequence MQAATLSFHPSAPPPQTSAC. A chloroplast-targeting transit peptide spans 1–70; sequence MQAATLSFHP…PAVATGKYVR (70 aa). The 111-residue stretch at 71–181 folds into the Thioredoxin domain; sequence EDYLVKKVSA…MMRDIINNDL (111 aa). Catalysis depends on nucleophile residues cysteine 104 and cysteine 107. Residues cysteine 104 and cysteine 107 are joined by a disulfide bond.

Belongs to the thioredoxin family. Plant CITRX-type subfamily.

Its subcellular location is the plastid. It is found in the chloroplast. Functionally, probable thiol-disulfide oxidoreductase that may play a role in proper chloroplast development. The chain is Thioredoxin-like protein CITRX1, chloroplastic from Nicotiana benthamiana.